Here is a 391-residue protein sequence, read N- to C-terminus: Elongation factor Tu (391 aa).

The tr-type G domain occupies 10–201 (KPHVNIGTIG…EVDKYIPTPE (192 aa)). The interval 19 to 26 (GHVDHGKT) is G1. 19 to 26 (GHVDHGKT) provides a ligand contact to GTP. A Mg(2+)-binding site is contributed by Thr-26. Residues 55–59 (GITIS) form a G2 region. Residues 76–79 (DCPG) form a G3 region. GTP-binding positions include 76–80 (DCPGH) and 131–134 (NKVD). The tract at residues 131 to 134 (NKVD) is G4. Positions 169–171 (SAL) are G5.

It belongs to the TRAFAC class translation factor GTPase superfamily. Classic translation factor GTPase family. EF-Tu/EF-1A subfamily. In terms of assembly, monomer.

The protein resides in the cytoplasm. It carries out the reaction GTP + H2O = GDP + phosphate + H(+). Functionally, GTP hydrolase that promotes the GTP-dependent binding of aminoacyl-tRNA to the A-site of ribosomes during protein biosynthesis. The sequence is that of Elongation factor Tu from Chelativorans sp. (strain BNC1).